The sequence spans 326 residues: Glycerol-3-phosphate dehydrogenase [NAD(P)+] (326 aa).

Residues Trp13, Arg33, and Lys107 each contribute to the NADPH site. 3 residues coordinate sn-glycerol 3-phosphate: Lys107, Gly135, and Ser137. Ala139 is a binding site for NADPH. 5 residues coordinate sn-glycerol 3-phosphate: Lys190, Asp243, Ser253, Arg254, and Asn255. The active-site Proton acceptor is Lys190. An NADPH-binding site is contributed by Arg254. Leu273 and Glu275 together coordinate NADPH.

Belongs to the NAD-dependent glycerol-3-phosphate dehydrogenase family.

The protein localises to the cytoplasm. It catalyses the reaction sn-glycerol 3-phosphate + NAD(+) = dihydroxyacetone phosphate + NADH + H(+). The enzyme catalyses sn-glycerol 3-phosphate + NADP(+) = dihydroxyacetone phosphate + NADPH + H(+). Its pathway is membrane lipid metabolism; glycerophospholipid metabolism. Catalyzes the reduction of the glycolytic intermediate dihydroxyacetone phosphate (DHAP) to sn-glycerol 3-phosphate (G3P), the key precursor for phospholipid synthesis. The polypeptide is Glycerol-3-phosphate dehydrogenase [NAD(P)+] (Brucella ovis (strain ATCC 25840 / 63/290 / NCTC 10512)).